The sequence spans 100 residues: Colipase-like protein 2 (100 aa).

Residues 1–21 (MAAALALVAGVLSGAVLPLWS) form the signal peptide. Intrachain disulfides connect C34-C45, C40-C56, C44-C78, C66-C86, and C80-C97.

This sequence belongs to the colipase family.

It localises to the secreted. The chain is Colipase-like protein 2 (CLPSL2) from Homo sapiens (Human).